Consider the following 333-residue polypeptide: Ferrochelatase (333 aa).

Residues His-202 and Glu-284 each coordinate Fe cation.

This sequence belongs to the ferrochelatase family.

The protein resides in the cytoplasm. It catalyses the reaction heme b + 2 H(+) = protoporphyrin IX + Fe(2+). It participates in porphyrin-containing compound metabolism; protoheme biosynthesis; protoheme from protoporphyrin-IX: step 1/1. In terms of biological role, catalyzes the ferrous insertion into protoporphyrin IX. In Francisella tularensis subsp. novicida (strain U112), this protein is Ferrochelatase.